Reading from the N-terminus, the 311-residue chain is MIKLLFMGTPQFSATVLKGLLDNPAYEILGVVTQPDRAVGRKKDIKVTPVKQLALEHGISIYQPEKLSGSQELIEIMELGADGIITAAFGQFLPTILLDSVSFAINVHASLLPKYRGGAPIHYAIMNGDKEAGVTIMEMIKEMDAGDMVAKASTPILETDNVGTLFEKLAIIGRDLLLDSLPAYLSGELKPIPQDHSQATFSPNISPEQEKLDWTMSDQEVFNHIRGMNPWPVAHTFLEGQRLKIYEAQLAEGEGLPGQVIVKTKKSLVIAAGQGALSLLVVQPAGKPKMAIADFLNGLGRKLEVGDFIGR.

110–113 contacts (6S)-5,6,7,8-tetrahydrofolate; the sequence is SLLP.

The protein belongs to the Fmt family.

It catalyses the reaction L-methionyl-tRNA(fMet) + (6R)-10-formyltetrahydrofolate = N-formyl-L-methionyl-tRNA(fMet) + (6S)-5,6,7,8-tetrahydrofolate + H(+). Functionally, attaches a formyl group to the free amino group of methionyl-tRNA(fMet). The formyl group appears to play a dual role in the initiator identity of N-formylmethionyl-tRNA by promoting its recognition by IF2 and preventing the misappropriation of this tRNA by the elongation apparatus. In Streptococcus pyogenes serotype M28 (strain MGAS6180), this protein is Methionyl-tRNA formyltransferase.